The following is an 891-amino-acid chain: MKRLFEKVFGSESEREIKKIDKLADRVEALDEEYKKLSDQALQSKTAELKGRLSQGEALDDILPEAFATMREAAWRVLGMKHYRVQIYGAIILHQGRISEMKTGEGKTLMATLPVYLNALAGKGVHVVTVNDYLAQRDCEWMGKLYEFLGLSVGVIVHGITIEQRRAAYNADVTYGTNNEFGFDYLRDNMVIYQKDMVQREQNYAIVDEVDSILIDEARTPLIISGQGEKSTKLYHIVDQFVKTLKIEDDVSLDEKANSVTLTEDGGTKAEKAFGIENLADMNNMELSHHINQALKARNLMRLDKDYVVKDGEIIIVDDFTGRLMFGRRYSDGLHQAIEAKEGLQIQRESKTLATITFQNYFRMYRKLSGMTGTAKTEEDEFRAIYNMDVVEIPTNRVIVRDDQADGVYKGEQGKFEALAKDIEGRYKKGQPVLVGTISIEKSEELATLLKRKGIPCEVLNAKHHEREAEIVAQAGRKGIITIATNMAGRGTDIILGGNPEFLAKREMKKRGYADELIANATSHHETDDEELQAARKVYNDLLEKFKKETEQEHKDVIEAGGLHIIGTERHESRRIDNQLRGRAGRQGDPGSSKFYISLEDDLMRLFGGDKMLSIVEKMGLEDDEAIEHGMLSRSIENAQKKVEGRNFGIRKHVLQYDDVMNKQREVIYGERKKVLAGESLKDHVLNMARNIINEAVAIYTADAKYPEEWDLVGLGEYLAGIYMQRATLSFDNIEELTVETLQEQIYETSEKLYEAKEEEIEAERMRELERIIVLQVIDTKWMDHIDAMDQLRQGIGLRAIGQIDPVRAYQVEGFDMFNAMINSIQEDTVKYLFNVEPQAKVERKQVAKPIEASHGDGNRKKAPVVKEKEAGRNDPCPCGSGKKYKKCCGE.

ATP-binding positions include Q86, 104–108, and D493; that span reads GEGKT. A compositionally biased stretch (basic and acidic residues) spans 845–873; it reads KQVAKPIEASHGDGNRKKAPVVKEKEAGR. The disordered stretch occupies residues 845–891; it reads KQVAKPIEASHGDGNRKKAPVVKEKEAGRNDPCPCGSGKKYKKCCGE. Zn(2+) contacts are provided by C877, C879, C888, and C889.

This sequence belongs to the SecA family. Monomer and homodimer. Part of the essential Sec protein translocation apparatus which comprises SecA, SecYEG and auxiliary proteins SecDF. Other proteins may also be involved. Requires Zn(2+) as cofactor.

It localises to the cell membrane. The protein resides in the cytoplasm. It catalyses the reaction ATP + H2O + cellular proteinSide 1 = ADP + phosphate + cellular proteinSide 2.. Functionally, part of the Sec protein translocase complex. Interacts with the SecYEG preprotein conducting channel. Has a central role in coupling the hydrolysis of ATP to the transfer of proteins into and across the cell membrane, serving as an ATP-driven molecular motor driving the stepwise translocation of polypeptide chains across the membrane. The chain is Protein translocase subunit SecA 1 from Alkaliphilus metalliredigens (strain QYMF).